A 342-amino-acid polypeptide reads, in one-letter code: tRNA-specific 2-thiouridylase MnmA (342 aa).

ATP is bound by residues 6–13 (LLSGGVDS) and L32. Catalysis depends on C92, which acts as the Nucleophile. C92 and C191 form a disulfide bridge. G116 is a binding site for ATP. An interaction with tRNA region spans residues 138–140 (KDQ). C191 acts as the Cysteine persulfide intermediate in catalysis. Residues 293 to 294 (RY) are interaction with tRNA.

The protein belongs to the MnmA/TRMU family.

It is found in the cytoplasm. It carries out the reaction S-sulfanyl-L-cysteinyl-[protein] + uridine(34) in tRNA + AH2 + ATP = 2-thiouridine(34) in tRNA + L-cysteinyl-[protein] + A + AMP + diphosphate + H(+). Functionally, catalyzes the 2-thiolation of uridine at the wobble position (U34) of tRNA, leading to the formation of s(2)U34. The sequence is that of tRNA-specific 2-thiouridylase MnmA from Helicobacter pylori (strain ATCC 700392 / 26695) (Campylobacter pylori).